A 103-amino-acid chain; its full sequence is Large ribosomal subunit protein bL21 (103 aa).

Belongs to the bacterial ribosomal protein bL21 family. As to quaternary structure, part of the 50S ribosomal subunit. Contacts protein L20.

Functionally, this protein binds to 23S rRNA in the presence of protein L20. This Teredinibacter turnerae (strain ATCC 39867 / T7901) protein is Large ribosomal subunit protein bL21.